The chain runs to 57 residues: MLGWVVTFLVVALIAGILGFGGIAGASIEIAKIIFFIAVVLFLVSAVIGLARGRTRV.

Helical transmembrane passes span 4-24 and 30-50; these read WVVT…GGIA and IAKI…VIGL.

This sequence belongs to the UPF0391 family.

The protein localises to the cell membrane. This chain is UPF0391 membrane protein RPE_2138, found in Rhodopseudomonas palustris (strain BisA53).